We begin with the raw amino-acid sequence, 326 residues long: ATP phosphoribosyltransferase regulatory subunit (326 aa).

The protein belongs to the class-II aminoacyl-tRNA synthetase family. HisZ subfamily. Heteromultimer composed of HisG and HisZ subunits.

It localises to the cytoplasm. It functions in the pathway amino-acid biosynthesis; L-histidine biosynthesis; L-histidine from 5-phospho-alpha-D-ribose 1-diphosphate: step 1/9. Functionally, required for the first step of histidine biosynthesis. May allow the feedback regulation of ATP phosphoribosyltransferase activity by histidine. The sequence is that of ATP phosphoribosyltransferase regulatory subunit from Streptococcus thermophilus (strain ATCC BAA-491 / LMD-9).